The following is a 451-amino-acid chain: Cindoxin reductase (451 aa).

Ala24, Glu45, Leu53, and Val89 together coordinate FAD. NADP(+) is bound by residues 157-160 (NGNV) and 197-198 (RS). FAD-binding positions include Trp338 and 345–347 (GGI). Residue Gly345 participates in NADP(+) binding.

Belongs to the ferredoxin--NADP reductase type 1 family. FAD is required as a cofactor.

In terms of biological role, involved in the degradation of cineol (eucalyptol). Catalyzes the reduction of cindoxin (CinC). In Citrobacter braakii, this protein is Cindoxin reductase (cinB).